Consider the following 291-residue polypeptide: tRNA-cytidine(32) 2-sulfurtransferase (291 aa).

Residues 36 to 41 (SGGKDS) carry the PP-loop motif motif. [4Fe-4S] cluster is bound by residues Cys111, Cys114, and Cys202. Residues 259–291 (DPWLDAEDEEAEDCGEPSAGDGVVSLGGARGGR) form a disordered region. Over residues 262–273 (LDAEDEEAEDCG) the composition is skewed to acidic residues.

Belongs to the TtcA family. In terms of assembly, homodimer. Mg(2+) is required as a cofactor. Requires [4Fe-4S] cluster as cofactor.

The protein localises to the cytoplasm. It carries out the reaction cytidine(32) in tRNA + S-sulfanyl-L-cysteinyl-[cysteine desulfurase] + AH2 + ATP = 2-thiocytidine(32) in tRNA + L-cysteinyl-[cysteine desulfurase] + A + AMP + diphosphate + H(+). Its pathway is tRNA modification. Catalyzes the ATP-dependent 2-thiolation of cytidine in position 32 of tRNA, to form 2-thiocytidine (s(2)C32). The sulfur atoms are provided by the cysteine/cysteine desulfurase (IscS) system. In Anaeromyxobacter sp. (strain K), this protein is tRNA-cytidine(32) 2-sulfurtransferase.